The following is a 638-amino-acid chain: Bifunctional protein glk (638 aa).

The interval methionine 1 to proline 20 is disordered. The tract at residues methionine 1–serine 341 is glucokinase. ATP is bound at residue alanine 24–threonine 29. An HTH rpiR-type domain is found at serine 342–threonine 418. The interval serine 342–aspartate 638 is putative HTH-type transcriptional regulator. Residues isoleucine 378–arginine 397 constitute a DNA-binding region (H-T-H motif). The region spanning alanine 462–valine 601 is the SIS domain.

It in the N-terminal section; belongs to the bacterial glucokinase family.

The protein resides in the cytoplasm. It carries out the reaction D-glucose + ATP = D-glucose 6-phosphate + ADP + H(+). The protein is Bifunctional protein glk (glk) of Paraburkholderia xenovorans (strain LB400).